The chain runs to 1183 residues: Putative ATP-dependent RNA helicase PB1A10.06c (1183 aa).

Disordered regions lie at residues 1-92 (MGRL…KKRL) and 165-315 (ETTT…RASR). Basic and acidic residues predominate over residues 60-81 (VPKEERQKRKQELKDQLLKENE). Low complexity-rich tracts occupy residues 165 to 176 (ETTTTKSSTAET) and 184 to 196 (TRSGFGFGFSTGT). Positions 224–251 (EDPEYDSAEEDYLSTDSEEFSEDSDNSS) are enriched in acidic residues. Over residues 252–270 (EENKDTNEPSTKDAEKTVP) the composition is skewed to basic and acidic residues. The span at 292–308 (ENEDFDLETSEDDSSDD) shows a compositional bias: acidic residues. The Helicase ATP-binding domain maps to 408-585 (MEQIFANDVV…KLLFSVPPPI (178 aa)). 421–428 (GATGSGKT) is an ATP binding site. Positions 522–525 (DEAH) match the DEAH box motif. Positions 611–831 (AFDKVCLIHK…SIVLQMKNMN (221 aa)) constitute a Helicase C-terminal domain. Acidic residues predominate over residues 673 to 683 (EDLQSETEDID). Residues 673 to 696 (EDLQSETEDIDQVPTSSSSSVTYD) are disordered.

This sequence belongs to the DEAD box helicase family. DEAH subfamily.

Its subcellular location is the nucleus. The protein localises to the nucleolus. It catalyses the reaction ATP + H2O = ADP + phosphate + H(+). In Schizosaccharomyces pombe (strain 972 / ATCC 24843) (Fission yeast), this protein is Putative ATP-dependent RNA helicase PB1A10.06c.